A 571-amino-acid polypeptide reads, in one-letter code: 5' exonuclease Apollo (571 aa).

2 disordered regions span residues 346–386 (TSRP…TDRN) and 431–487 (MDDN…SMHD). Basic and acidic residues-rich tracts occupy residues 367 to 386 (NHDD…TDRN) and 453 to 468 (ECDH…EKSP). The segment covering 470-487 (MGSTNSGEMCSSMDSMHD) has biased composition (polar residues). The TBM motif lies at 501 to 532 (NPQSVTSAIPITLESEQFEHWLLENFTIPAEE).

It belongs to the DNA repair metallo-beta-lactamase (DRMBL) family. In terms of assembly, interacts with terf2; the interaction is direct.

The protein resides in the chromosome. Its subcellular location is the telomere. It localises to the nucleus. It carries out the reaction a beta-lactam + H2O = a substituted beta-amino acid. Its function is as follows. 5'-3' exonuclease that plays a central role in telomere maintenance and protection during S-phase. Participates in the protection of telomeres against non-homologous end-joining (NHEJ)-mediated repair, thereby ensuring that telomeres do not fuse. Plays a key role in telomeric loop (T loop) formation by being recruited by terf2 at the leading end telomeres and by processing leading-end telomeres immediately after their replication via its exonuclease activity: generates 3' single-stranded overhang at the leading end telomeres avoiding blunt leading-end telomeres that are vulnerable to end-joining reactions and expose the telomere end in a manner that activates the DNA repair pathways. Possesses beta-lactamase activity, catalyzing the hydrolysis of penicillin G and nitrocefin. Exhibits no activity towards other beta-lactam antibiotic classes including cephalosporins (cefotaxime) and carbapenems (imipenem). In Danio rerio (Zebrafish), this protein is 5' exonuclease Apollo (dclre1b).